The following is a 65-amino-acid chain: Small ribosomal subunit protein bS21 (65 aa).

The disordered stretch occupies residues 43–65 (VDDRLKRARSKRRAQRANEESNA). Residues 48 to 57 (KRARSKRRAQ) show a composition bias toward basic residues.

Belongs to the bacterial ribosomal protein bS21 family.

The sequence is that of Small ribosomal subunit protein bS21 from Chloroherpeton thalassium (strain ATCC 35110 / GB-78).